The sequence spans 319 residues: Ribose-phosphate pyrophosphokinase (319 aa).

Residues 41-43 (NGE) and 100-101 (RQ) contribute to the ATP site. Mg(2+)-binding residues include histidine 134 and aspartate 175. Lysine 198 is an active-site residue. D-ribose 5-phosphate contacts are provided by residues arginine 200, aspartate 224, and 228-232 (DTAGS).

The protein belongs to the ribose-phosphate pyrophosphokinase family. Class I subfamily. Homohexamer. It depends on Mg(2+) as a cofactor.

It localises to the cytoplasm. It carries out the reaction D-ribose 5-phosphate + ATP = 5-phospho-alpha-D-ribose 1-diphosphate + AMP + H(+). The protein operates within metabolic intermediate biosynthesis; 5-phospho-alpha-D-ribose 1-diphosphate biosynthesis; 5-phospho-alpha-D-ribose 1-diphosphate from D-ribose 5-phosphate (route I): step 1/1. Functionally, involved in the biosynthesis of the central metabolite phospho-alpha-D-ribosyl-1-pyrophosphate (PRPP) via the transfer of pyrophosphoryl group from ATP to 1-hydroxyl of ribose-5-phosphate (Rib-5-P). The polypeptide is Ribose-phosphate pyrophosphokinase (Clostridium acetobutylicum (strain ATCC 824 / DSM 792 / JCM 1419 / IAM 19013 / LMG 5710 / NBRC 13948 / NRRL B-527 / VKM B-1787 / 2291 / W)).